The chain runs to 503 residues: Putative cytochrome P450 71A28 (503 aa).

Residues 1–21 traverse the membrane as a helical segment; that stretch reads MILISLCFTTFLAFLFLNPLL. Residue Cys-443 coordinates heme.

The protein belongs to the cytochrome P450 family. It depends on heme as a cofactor.

It is found in the membrane. The sequence is that of Putative cytochrome P450 71A28 (CYP71A28) from Arabidopsis thaliana (Mouse-ear cress).